A 55-amino-acid polypeptide reads, in one-letter code: Large ribosomal subunit protein bL33 (55 aa).

It belongs to the bacterial ribosomal protein bL33 family.

This is Large ribosomal subunit protein bL33 from Yersinia pestis (strain Pestoides F).